Here is a 308-residue protein sequence, read N- to C-terminus: Mycothiol acetyltransferase (308 aa).

2 consecutive N-acetyltransferase domains span residues 16–152 and 165–308; these read ETLA…RPLA and VTVR…RTES. Residue Glu47 participates in 1D-myo-inositol 2-(L-cysteinylamino)-2-deoxy-alpha-D-glucopyranoside binding. 91–93 is a binding site for acetyl-CoA; that stretch reads LVV. Glu192, Lys231, and Glu240 together coordinate 1D-myo-inositol 2-(L-cysteinylamino)-2-deoxy-alpha-D-glucopyranoside. Residues 244–246 and 251–257 each bind acetyl-CoA; these read LGV and QGGGLGK. Tyr278 provides a ligand contact to 1D-myo-inositol 2-(L-cysteinylamino)-2-deoxy-alpha-D-glucopyranoside.

The protein belongs to the acetyltransferase family. MshD subfamily. As to quaternary structure, monomer.

The catalysed reaction is 1D-myo-inositol 2-(L-cysteinylamino)-2-deoxy-alpha-D-glucopyranoside + acetyl-CoA = mycothiol + CoA + H(+). Functionally, catalyzes the transfer of acetyl from acetyl-CoA to desacetylmycothiol (Cys-GlcN-Ins) to form mycothiol. In Streptomyces avermitilis (strain ATCC 31267 / DSM 46492 / JCM 5070 / NBRC 14893 / NCIMB 12804 / NRRL 8165 / MA-4680), this protein is Mycothiol acetyltransferase.